The primary structure comprises 570 residues: Putative diflavin flavoprotein A 6 (570 aa).

The segment at Ala38–His231 is zinc metallo-hydrolase. The Flavodoxin-like domain maps to Val260–Lys402. The flavodoxin-reductase-like stretch occupies residues Val421–Tyr570.

This sequence in the N-terminal section; belongs to the zinc metallo-hydrolase group 3 family. In the C-terminal section; belongs to the flavodoxin reductase family. It depends on Fe cation as a cofactor.

Functionally, mediates electron transfer from NADH to oxygen, reducing it to water. This modular protein has 3 redox cofactors, in other organisms the same activity requires 2 or 3 proteins. The polypeptide is Putative diflavin flavoprotein A 6 (dfa6) (Nostoc sp. (strain PCC 7120 / SAG 25.82 / UTEX 2576)).